Reading from the N-terminus, the 375-residue chain is Pulmonary surfactant-associated protein D (375 aa).

The signal sequence occupies residues 1–20 (MLLFLLSALVLLTQPLGYLE). 2 positions are modified to S-nitrosocysteine: C35 and C40. Positions 45–221 (SGLPGRDGRD…DKGAKGESGL (177 aa)) are disordered. Residues 46–222 (GLPGRDGRDG…KGAKGESGLP (177 aa)) form the Collagen-like domain. A compositionally biased stretch (basic and acidic residues) spans 50-65 (RDGRDGREGPRGEKGD). Residues 66-86 (PGLPGAAGQAGMPGQAGPVGP) are compositionally biased toward low complexity. P78 carries the post-translational modification 4-hydroxyproline. 5-hydroxylysine is present on K87. N-linked (GlcNAc...) asparagine glycosylation is present at N90. P96 carries the post-translational modification 4-hydroxyproline. A 5-hydroxylysine modification is found at K99. The span at 105–114 (SGPPGPPGVP) shows a compositional bias: pro residues. Composition is skewed to low complexity over residues 116-132 (PAGR…IGPQ) and 138-150 (KGEA…VGAP). A 4-hydroxyproline mark is found at P171 and P177. Over residues 204 to 216 (KGDKGIPGDKGAK) the composition is skewed to basic and acidic residues. A coiled-coil region spans residues 223 to 252 (DVASLRQQVEALQGQVQHLQAAFSQYKKVE). Positions 260–375 (VGEKIFKTAG…GEKRLVVCEF (116 aa)) constitute a C-type lectin domain. Disulfide bonds link C281-C373 and C351-C365.

The protein belongs to the SFTPD family. In terms of assembly, oligomeric complex of 4 set of homotrimers. In terms of processing, the N-terminus is blocked. Hydroxylation on proline residues within the sequence motif, GXPG, is most likely to be 4-hydroxy as this fits the requirement for 4-hydroxylation in vertebrates. Post-translationally, S-nitrosylation at Cys-35 and Cys-40 alters the quaternary structure which results in a pro-inflammatory chemoattractive signaling activity with macrophages. As to expression, expressed in lung, brain, pancreas and adipose tissue (mainly mature adipocytes).

It is found in the secreted. Its subcellular location is the extracellular space. It localises to the extracellular matrix. The protein localises to the surface film. Functionally, contributes to the lung's defense against inhaled microorganisms, organic antigens and toxins. Interacts with compounds such as bacterial lipopolysaccharides, oligosaccharides and fatty acids and modulates leukocyte action in immune response. May participate in the extracellular reorganization or turnover of pulmonary surfactant. Binds strongly maltose residues and to a lesser extent other alpha-glucosyl moieties. The polypeptide is Pulmonary surfactant-associated protein D (SFTPD) (Homo sapiens (Human)).